The sequence spans 210 residues: N-(5'-phosphoribosyl)anthranilate isomerase (210 aa).

It belongs to the TrpF family.

It carries out the reaction N-(5-phospho-beta-D-ribosyl)anthranilate = 1-(2-carboxyphenylamino)-1-deoxy-D-ribulose 5-phosphate. Its pathway is amino-acid biosynthesis; L-tryptophan biosynthesis; L-tryptophan from chorismate: step 3/5. This is N-(5'-phosphoribosyl)anthranilate isomerase from Staphylococcus aureus (strain Mu3 / ATCC 700698).